The primary structure comprises 1523 residues: uncharacterized protein (1523 aa).

The interval 1–89 is disordered; sequence MLPTSSNNEE…GSSNMNPYDR (89 aa). 993 to 1000 contacts ATP; it reads SPFGCGKS. Polar residues-rich tracts occupy residues 1463 to 1476 and 1485 to 1498; these read TSRQ…NEYN and QSNN…SVTN. The interval 1463–1498 is disordered; sequence TSRQSKQQRANEYNSQHKHVKRQSNNDYGSQRSVTN.

It belongs to the DNA2/NAM7 helicase family.

This is an uncharacterized protein from Caenorhabditis elegans.